The chain runs to 265 residues: Zinc transporter ZupT (265 aa).

8 consecutive transmembrane segments (helical) span residues 6–26 (IAFA…GGAL), 37–57 (FMAA…FMEI), 77–97 (WTMM…DRLV), 122–142 (GMFT…ATFL), 150–170 (IAIP…IAVA), 184–204 (FWWA…GFAL), 208–228 (FIGP…MVFI), and 245–265 (CAIY…ALFI). Residues Asn-133 and Glu-136 each contribute to the Fe(2+) site. Residues Glu-136 and His-161 each coordinate Zn(2+). Fe(2+)-binding residues include Asn-162, Glu-165, and Glu-194. Glu-165 is a binding site for Zn(2+).

The protein belongs to the ZIP transporter (TC 2.A.5) family. ZupT subfamily.

It is found in the cell membrane. The enzyme catalyses Zn(2+)(in) = Zn(2+)(out). Mediates zinc uptake. May also transport other divalent cations. The sequence is that of Zinc transporter ZupT from Corynebacterium aurimucosum (strain ATCC 700975 / DSM 44827 / CIP 107346 / CN-1) (Corynebacterium nigricans).